We begin with the raw amino-acid sequence, 168 residues long: Protein-export protein SecB (168 aa).

The protein belongs to the SecB family. As to quaternary structure, homotetramer, a dimer of dimers. One homotetramer interacts with 1 SecA dimer.

It is found in the cytoplasm. Functionally, one of the proteins required for the normal export of preproteins out of the cell cytoplasm. It is a molecular chaperone that binds to a subset of precursor proteins, maintaining them in a translocation-competent state. It also specifically binds to its receptor SecA. The chain is Protein-export protein SecB from Haemophilus influenzae (strain PittGG).